The sequence spans 252 residues: Small ribosomal subunit protein eS4 (252 aa).

One can recognise an S4 RNA-binding domain in the interval 43-106; that stretch reads LPLLILVRDM…NKYYRVIPVP (64 aa).

This sequence belongs to the eukaryotic ribosomal protein eS4 family.

In Desulfurococcus amylolyticus (strain DSM 18924 / JCM 16383 / VKM B-2413 / 1221n) (Desulfurococcus kamchatkensis), this protein is Small ribosomal subunit protein eS4.